A 418-amino-acid chain; its full sequence is Acyl-coenzyme A amino acid N-acyltransferase 2 (418 aa).

Residues serine 234, aspartate 327, and histidine 361 each act as charge relay system in the active site. Positions 416 to 418 match the Microbody targeting signal motif; sequence GKL.

The protein belongs to the C/M/P thioester hydrolase family.

It is found in the peroxisome. Its function is as follows. Acyltransferase which efficiently conjugates very long-chain and long-chain fatty acids to taurine. Shows no conjugation activity in the presence of glycine. This is Acyl-coenzyme A amino acid N-acyltransferase 2 from Rattus norvegicus (Rat).